The following is a 677-amino-acid chain: Protein PALS1 (677 aa).

The segment at 1–347 (MTTSHMNGYV…AQIKSPPIKE (347 aa)) is required for the correct localization of PALS1 and PATJ at cell-cell contacts and the normal formation of tight junctions and adherens junctions. The tract at residues 39–81 (ELGARTLPVRRSAQLEKIRQQQEDRRRREEEGRSRQELDLNSS) is disordered. A compositionally biased stretch (basic and acidic residues) spans 51 to 76 (AQLEKIRQQQEDRRRREEEGRSRQEL). L27 domains are found at residues 121 to 178 (ALLE…NRPS) and 180 to 236 (PYPL…MQLE). In terms of domain architecture, PDZ spans 258–338 (IVRIEKAKDI…VLSFVLIPSA (81 aa)). Residues 347–419 (ETVVHVKAHF…PGKSFQQQRE (73 aa)) enclose the SH3 domain. The 182-residue stretch at 481-662 (KRPIALIGPP…SYQELLRLIN (182 aa)) folds into the Guanylate kinase-like domain. Position 488-495 (488-495 (GPPNCGQN)) interacts with ATP. The interval 506–526 (PDRFAGPVPHTTRSRRDAEAN) is disordered.

It belongs to the MAGUK family. As to expression, expressed in the retina and in the neural tube.

Its subcellular location is the apical cell membrane. It localises to the cell junction. The protein localises to the tight junction. Its function is as follows. Plays a role in tight junction biogenesis and in the establishment of cell polarity in epithelial cells. Also involved in adherens junction biogenesis. Required for polarized epithelial organization, cell-cell adhesion and remodeling of myocardial cells during heart tube elongation during embryogenesis. Functions in cellular patterning of the retina and development of the retinal pigmented epithelium. Also required for embryo body axis specification. This Danio rerio (Zebrafish) protein is Protein PALS1 (pals1a).